A 347-amino-acid chain; its full sequence is Fructose-1,6-bisphosphatase class 1 (347 aa).

4 residues coordinate Mg(2+): Glu-107, Asp-128, Leu-130, and Asp-131. Residues 131 to 134 (DGSS), Asn-224, Tyr-257, and Lys-286 each bind substrate. A Mg(2+)-binding site is contributed by Glu-292.

This sequence belongs to the FBPase class 1 family. As to quaternary structure, homotetramer. Requires Mg(2+) as cofactor.

The protein localises to the cytoplasm. It carries out the reaction beta-D-fructose 1,6-bisphosphate + H2O = beta-D-fructose 6-phosphate + phosphate. It participates in carbohydrate biosynthesis; gluconeogenesis. The protein is Fructose-1,6-bisphosphatase class 1 of Sorangium cellulosum (strain So ce56) (Polyangium cellulosum (strain So ce56)).